Here is an 86-residue protein sequence, read N- to C-terminus: MDNIDKTMKFDYEEIPKDNVETVLNNVHRTLEERGYNAVNQIVGYLLSGDPAYIPRQNDARNQIRHIDRDVIMEELVSNYLKENKK.

Belongs to the UPF0297 family.

The protein is UPF0297 protein SH1302 of Staphylococcus haemolyticus (strain JCSC1435).